The chain runs to 391 residues: Nucleosome assembly protein 1-like 1 (391 aa).

Basic and acidic residues predominate over residues 1 to 10 (MADIDNKEQS). The segment at 1-32 (MADIDNKEQSELDQDLDDVEEVEEEETGEETK) is disordered. Ala-2 carries the N-acetylalanine modification. Phosphoserine is present on Ser-10. Positions 11 to 28 (ELDQDLDDVEEVEEEETG) are enriched in acidic residues. Residues Thr-62 and Thr-64 each carry the phosphothreonine modification. Ser-69 carries the post-translational modification Phosphoserine. An N6-acetyllysine modification is found at Lys-116. The NAP1L motif motif lies at 125–150 (YEPTEEECEWKPDEEDEISEELKEKA). Positions 132–143 (CEWKPDEEDEIS) are enriched in acidic residues. Residues 132–163 (CEWKPDEEDEISEELKEKAKVEDEKKDEEKED) are disordered. Phosphoserine is present on Ser-143. The segment covering 144–163 (EELKEKAKVEDEKKDEEKED) has biased composition (basic and acidic residues). Positions 273 to 279 (IKKKQKH) match the Nuclear localization signal motif. Residues 345-391 (EAIEDDDDDYDEEGEEADEEGEEEGDEENDPDYDPKKDQNPAECKQQ) form a disordered region. Residues 346-376 (AIEDDDDDYDEEGEEADEEGEEEGDEENDPD) show a composition bias toward acidic residues. 5-glutamyl polyglycine occurs at positions 359 and 360. Over residues 377–391 (YDPKKDQNPAECKQQ) the composition is skewed to basic and acidic residues. Cys-388 is subject to Cysteine methyl ester. Residue Cys-388 is the site of S-farnesyl cysteine attachment. A propeptide spans 389-391 (KQQ) (removed in mature form).

This sequence belongs to the nucleosome assembly protein (NAP) family. In terms of assembly, homodimer. The dimer binds strongly and sequentially to single and double H2A-H2B heterodimers. Interacts with ERCC6; this interaction increases ERCC6 processivity. Interacts with RAD54. Interacts with SETD1A. Post-translationally, polyglycylated by TTLL10 on glutamate residues, resulting in polyglycine chains on the gamma-carboxyl group. Both polyglutamylation and polyglycylation modifications can coexist on the same protein on adjacent residues, and lowering polyglycylation levels increases polyglutamylation, and reciprocally. Polyglutamylated by TTLL4 on glutamate residues, resulting in polyglutamate chains on the gamma-carboxyl group. Both polyglutamylation and polyglycylation modifications can coexist on the same protein on adjacent residues, and lowering polyglycylation levels increases polyglutamylation, and reciprocally.

It localises to the nucleus. It is found in the melanosome. The protein localises to the cytoplasm. Its function is as follows. Histone chaperone that plays a role in the nuclear import of H2A-H2B and nucleosome assembly. Also participates in several important DNA repair mechanisms: greatly enhances ERCC6-mediated chromatin remodeling which is essential for transcription-coupled nucleotide excision DNA repair. Also stimulates homologous recombination (HR) by RAD51 and RAD54 which is essential in mitotic DNA double strand break (DSB) repair. Plays a key role in the regulation of embryonic neurogenesis. Promotes the proliferation of neural progenitors and inhibits neuronal differentiation during cortical development. Regulates neurogenesis via the modulation of RASSF10; regulates RASSF10 expression by promoting SETD1A-mediated H3K4 methylation at the RASSF10 promoter. In Bos taurus (Bovine), this protein is Nucleosome assembly protein 1-like 1 (NAP1L1).